Consider the following 308-residue polypeptide: Ectoine dioxygenase (308 aa).

Residue Q131 coordinates L-ectoine. Residue K137 participates in 2-oxoglutarate binding. Positions 148, 150, and 249 each coordinate Fe cation.

It belongs to the PhyH family. EctD subfamily. As to quaternary structure, homodimer. The cofactor is Fe(2+).

The enzyme catalyses L-ectoine + 2-oxoglutarate + O2 = 5-hydroxyectoine + succinate + CO2. Functionally, involved in the biosynthesis of 5-hydroxyectoine, called compatible solute, which helps organisms to survive extreme osmotic stress by acting as a highly soluble organic osmolyte. Catalyzes the 2-oxoglutarate-dependent selective hydroxylation of L-ectoine to yield (4S,5S)-5-hydroxyectoine. This Bordetella bronchiseptica (strain ATCC BAA-588 / NCTC 13252 / RB50) (Alcaligenes bronchisepticus) protein is Ectoine dioxygenase.